Consider the following 172-residue polypeptide: S-ribosylhomocysteine lyase (172 aa).

The Fe cation site is built by histidine 54, histidine 58, and cysteine 128.

This sequence belongs to the LuxS family. In terms of assembly, homodimer. Fe cation serves as cofactor.

The catalysed reaction is S-(5-deoxy-D-ribos-5-yl)-L-homocysteine = (S)-4,5-dihydroxypentane-2,3-dione + L-homocysteine. Functionally, involved in the synthesis of autoinducer 2 (AI-2) which is secreted by bacteria and is used to communicate both the cell density and the metabolic potential of the environment. The regulation of gene expression in response to changes in cell density is called quorum sensing. Catalyzes the transformation of S-ribosylhomocysteine (RHC) to homocysteine (HC) and 4,5-dihydroxy-2,3-pentadione (DPD). This Aliivibrio salmonicida (strain LFI1238) (Vibrio salmonicida (strain LFI1238)) protein is S-ribosylhomocysteine lyase.